We begin with the raw amino-acid sequence, 511 residues long: Probable pectinesterase/pectinesterase inhibitor 17 (511 aa).

Positions 1–23 are cleaved as a signal peptide; that stretch reads MMAFRAYIINFVILCILVASTVS. Residues 24 to 171 form a pectinesterase inhibitor 17 region; that stretch reads GYNQKDVKAW…SNLLCNTLAI (148 aa). N-linked (GlcNAc...) asparagine glycosylation is found at Asn112 and Asn160. The interval 237–414 is pectinesterase 17; sequence VKQGVYSENL…LRPVLGSTKT (178 aa). Positions 277 and 307 each coordinate substrate. The Proton donor; for pectinesterase activity role is filled by Asp330. Cys344 and Cys364 are joined by a disulfide. Residue Asp351 is the Nucleophile; for pectinesterase activity of the active site. Residues Arg418 and Trp420 each contribute to the substrate site.

The protein in the N-terminal section; belongs to the PMEI family. It in the C-terminal section; belongs to the pectinesterase family. In terms of tissue distribution, expressed in siliques.

Its subcellular location is the secreted. It is found in the cell wall. The enzyme catalyses [(1-&gt;4)-alpha-D-galacturonosyl methyl ester](n) + n H2O = [(1-&gt;4)-alpha-D-galacturonosyl](n) + n methanol + n H(+). The protein operates within glycan metabolism; pectin degradation; 2-dehydro-3-deoxy-D-gluconate from pectin: step 1/5. In terms of biological role, acts in the modification of cell walls via demethylesterification of cell wall pectin. The chain is Probable pectinesterase/pectinesterase inhibitor 17 (PME17) from Arabidopsis thaliana (Mouse-ear cress).